A 227-amino-acid polypeptide reads, in one-letter code: Atypical response regulator protein ChxR (227 aa).

The region spanning 6-108 (HVLLVSEHWD…ILKSAISLFL (103 aa)) is the Response regulatory domain. A DNA-binding region (ompR/PhoB-type) is located at residues 117 to 213 (PESIRFGPNV…LRGVGYLFSD (97 aa)).

In terms of assembly, homodimer.

Its function is as follows. May be a global positive regulator of transcription. Binds a cis-acting element of its own promoter DNA sequence and is hence probably also involved in its own transcription activation. The recognition sequence is 5'-WHGAWNH-N(3-5)-WHGAWNH-3', where W is A/T, H is C/A/T, N is G/C/A/T and the linker length in the middle is 3 to 5 nucleotides. The sequence is that of Atypical response regulator protein ChxR from Chlamydia trachomatis serovar L2 (strain ATCC VR-902B / DSM 19102 / 434/Bu).